The following is a 144-amino-acid chain: Putative pre-16S rRNA nuclease (144 aa).

Belongs to the YqgF nuclease family.

It is found in the cytoplasm. In terms of biological role, could be a nuclease involved in processing of the 5'-end of pre-16S rRNA. The chain is Putative pre-16S rRNA nuclease from Mycoplasma mobile (strain ATCC 43663 / 163K / NCTC 11711) (Mesomycoplasma mobile).